Consider the following 1665-residue polypeptide: Cortactin-binding protein 2 (1665 aa).

Disordered stretches follow at residues 1 to 23 (MATD…AGAT), 201 to 235 (EEKK…SEFD), 360 to 441 (ASHG…LHPG), 455 to 480 (GNAN…PTSR), and 499 to 617 (RFTS…PKPS). Residues 120 to 276 (KMQERMSTQL…EQLKRGNDNK (157 aa)) are a coiled coil. Residues 385–395 (GPSTGSTADLT) are compositionally biased toward polar residues. Residue R499 is modified to Asymmetric dimethylarginine. The span at 584 to 594 (TVASPPSSLPQ) shows a compositional bias: polar residues. ANK repeat units follow at residues 710–740 (GRPT…DINY), 744–773 (DGHS…QVDA), 777–806 (NGFT…NINH), 810–839 (GGQT…DRSI), 843–872 (DGWT…PAHG), and 914–944 (EGWT…EPER). The disordered stretch occupies residues 1447 to 1484 (CSKKKGESGAWRKVSTSPRKKSSRFSSPTWNKPDLSEE). Phosphoserine is present on S1526. The span at 1544-1562 (SESDISKIADSRDDLRRFD) shows a compositional bias: basic and acidic residues. The segment at 1544-1648 (SESDISKIAD…RQIEINNNSK (105 aa)) is disordered. Composition is skewed to polar residues over residues 1564–1576 (PGNN…TVNN) and 1584–1604 (KEVS…QSKT). The span at 1626-1640 (SQNTKRSSSSSNTRQ) shows a compositional bias: low complexity.

In terms of assembly, interacts with CTTN/cortactin SH3 domain. Interacts with STRN, STRN4/zinedin and MOB4/phocein; this interactions mediate the association with the STRIPAK core complex and may regulate dendritic spine distribution of the STRIPAK complex in hippocampal neurons. Activation of glutamate receptors weakens the interaction with STRN and STRN4.

The protein resides in the cytoplasm. It is found in the cell cortex. The protein localises to the cell projection. Its subcellular location is the dendritic spine. In terms of biological role, regulates the dendritic spine distribution of CTTN/cortactin in hippocampal neurons, and thus controls dendritic spinogenesis and dendritic spine maintenance. Associates with the striatin-interacting phosphatase and kinase (STRIPAK) core complex to regulate dendritic spine distribution of the STRIPAK complex in hippocampal neurons. This chain is Cortactin-binding protein 2 (CTTNBP2), found in Equus caballus (Horse).